A 915-amino-acid polypeptide reads, in one-letter code: Isoleucine--tRNA ligase (915 aa).

The 'HIGH' region motif lies at 57-67; the sequence is PYANGNLHMGH. Residue glutamate 554 participates in L-isoleucyl-5'-AMP binding. The 'KMSKS' region motif lies at 595-599; the sequence is KMSKS. Position 598 (lysine 598) interacts with ATP. Zn(2+) is bound by residues cysteine 885, cysteine 888, cysteine 905, and cysteine 908.

The protein belongs to the class-I aminoacyl-tRNA synthetase family. IleS type 1 subfamily. As to quaternary structure, monomer. Zn(2+) is required as a cofactor.

It is found in the cytoplasm. The catalysed reaction is tRNA(Ile) + L-isoleucine + ATP = L-isoleucyl-tRNA(Ile) + AMP + diphosphate. Catalyzes the attachment of isoleucine to tRNA(Ile). As IleRS can inadvertently accommodate and process structurally similar amino acids such as valine, to avoid such errors it has two additional distinct tRNA(Ile)-dependent editing activities. One activity is designated as 'pretransfer' editing and involves the hydrolysis of activated Val-AMP. The other activity is designated 'posttransfer' editing and involves deacylation of mischarged Val-tRNA(Ile). This chain is Isoleucine--tRNA ligase, found in Staphylococcus carnosus (strain TM300).